The primary structure comprises 299 residues: Heat stress transcription factor B-2a (299 aa).

The DNA-binding element occupies 21–115; that stretch reads PTPFLTKTFN…LLREIQRRKI (95 aa). The interval 119–157 is disordered; that stretch reads HQTVVAPSSEQRNQTMVVSPSNSGEDNNNNQVMSSSPSS. The interval 166-211 is hydrophobic repeat HR-A/B; the sequence is TGNGGLSVELLEENEKLRSQNIQLNRELTQMKSICDNIYSLMSNYV. The Nuclear localization signal signature appears at 261–264; it reads KRTR.

The protein belongs to the HSF family. Class B subfamily. As to quaternary structure, homotrimer. Exhibits temperature-dependent phosphorylation.

It localises to the nucleus. In terms of biological role, transcriptional regulator that specifically binds DNA sequence 5'-AGAAnnTTCT-3' known as heat shock promoter elements (HSE). The protein is Heat stress transcription factor B-2a (HSFB2A) of Arabidopsis thaliana (Mouse-ear cress).